The chain runs to 631 residues: Glutathione S-transferase C-terminal domain-containing protein (631 aa).

The region spanning 128–330 is the GST C-terminal domain; that stretch reads LGFKKTCLKA…QEVPRVQTAA (203 aa). Disordered regions lie at residues 188–233 and 345–373; these read HNDD…SSSA and TTSS…GGPR. The segment covering 211-224 has biased composition (basic and acidic residues); the sequence is AKEKTKSKGHRQET. Phosphoserine is present on Ser-231.

The protein belongs to the GSTCD family.

The protein localises to the cytoplasm. The protein is Glutathione S-transferase C-terminal domain-containing protein (GSTCD) of Bos taurus (Bovine).